The following is a 394-amino-acid chain: Chorismate synthase (394 aa).

NADP(+) is bound by residues R42 and R48. Residues R137–S139, Q258–A259, G302, K317–T321, and R343 contribute to the FMN site.

It belongs to the chorismate synthase family. As to quaternary structure, homotetramer. FMNH2 is required as a cofactor.

It catalyses the reaction 5-O-(1-carboxyvinyl)-3-phosphoshikimate = chorismate + phosphate. Its pathway is metabolic intermediate biosynthesis; chorismate biosynthesis; chorismate from D-erythrose 4-phosphate and phosphoenolpyruvate: step 7/7. Its function is as follows. Catalyzes the anti-1,4-elimination of the C-3 phosphate and the C-6 proR hydrogen from 5-enolpyruvylshikimate-3-phosphate (EPSP) to yield chorismate, which is the branch point compound that serves as the starting substrate for the three terminal pathways of aromatic amino acid biosynthesis. This reaction introduces a second double bond into the aromatic ring system. This chain is Chorismate synthase, found in Streptomyces coelicolor (strain ATCC BAA-471 / A3(2) / M145).